The following is a 1063-amino-acid chain: MASTTPITMEDLQKALEAQSRALRAELAAGASQSRRPRPPRQRDSSTSGDDSGRDSGGPRRRRGNRGRGQLRDWSRAPPPPEERQESRSQTPAPKPSRAPPQQPQPPRMQTGRGGSAPRPELGPPTNPFQAAVARGLRPPLHDPDTEAPTEACVTSWLWSEGEGAVFYRVDLHFTNLGTPPLDEDGRWDPALMYNPCGPEPPAHVVRAYNQPAGDVRGVWGKGERTYAEQDFRVGGTRWHRLLRMPVRGLDGDSAPLPPHTTERIETRSARHPWRIRFGAPQAFLAGLLLAAVAVGTARAGLQPRADMAAPPTLPQPPRAHGQHYGHHHHQLPFLGHDGHHGGTLRVGQHHRNASDVLPGHWLQGGWGCYNLSDWHQGTHVCHTKHMDFWCVEHDRPPPATPTPFTTAANSTTAATPATAPAPCHAGLNDSCGGFLSGCGPMRLRHGADTRCGRLICGLSTTAQYPPTRFGCAMRWGLPPWELVVLTARPEDGWTCRGVPAHPGTRCPELVSPMGRATCSPASALWLATANALSLDHALAAFVLLVPWVLIFMVCRRACRRRGAAAALTAVVLQGYNPPAYGEEAFTYLCTAPGCATQTPVPVRLAGVRFESKIVDGGCFAPWDLEATGACICEIPTDVSCEGLGAWVPTAPCARIWNGTQRACTFWAVNAYSSGGYAQLASYFNPGGSYYKQYHPTACEVEPAFGHSDAACWGFPTDTVMSVFALASYVQHPHKTVRVKFHTETRTVWQLSVAGASCNVTTEHPFCNTPHGQLEVQVPPDPGDLVEYIMNYTGNQQSRWGLGSPNCHGPDWASPVCQRHSPDCSRLVGATPERPRLRLVDADDPLLRTAPGPGEVWVTPVIGSQARKCGLHIRAGPYGHATVEMPEWIHAHTTSDPWHPPGPLGLKFKTVRPVALPRALAPPRNVRVTGCYQCGTPALVEGLAPGGGNCHLTVNGEDVGAFPPGKFVTAALLNTPPPYQVSCGGESDRASARVIDPAAQSFTGVVYGTHTTAVSETRQTWAEWAAAHWWQLTLGAICALLLAGLLACCAKCLYYLRGAIAPR.

The tract at residues 1–131 (MASTTPITME…LGPPTNPFQA (131 aa)) is disordered. The interval 30 to 69 (GASQSRRPRPPRQRDSSTSGDDSGRDSGGPRRRRGNRGRG) is human C1QBP/SF2P32-binding. Position 46 is a phosphoserine; by host (S46). Basic and acidic residues predominate over residues 70 to 87 (QLRDWSRAPPPPEERQES). Over residues 93–107 (APKPSRAPPQQPQPP) the composition is skewed to pro residues. Residues C153 and C197 are joined by a disulfide bond. Residues 279–300 (GAPQAFLAGLLLAAVAVGTARA) form a functions as E2 signal peptide region. Residues 301-534 (GLQPRADMAA…LWLATANALS (234 aa)) lie on the Extracellular side of the membrane. 4 N-linked (GlcNAc...) asparagine; by host glycosylation sites follow: N353, N371, N410, and N429. Residues 535-555 (LDHALAAFVLLVPWVLIFMVC) form a helical membrane-spanning segment. At 556–582 (RRACRRRGAAAALTAVVLQGYNPPAYG) the chain is on the cytoplasmic side. Residues 563 to 582 (GAAAALTAVVLQGYNPPAYG) are functions as E1 signal peptide. Over 583-1028 (EEAFTYLCTA…QTWAEWAAAH (446 aa)) the chain is Extracellular. 8 disulfide bridges follow: C590–C595, C619–C824, C641–C653, C699–C712, C758–C767, C807–C817, C931–C934, and C950–C983. The N-linked (GlcNAc...) asparagine; by host glycan is linked to N658. Ca(2+) is bound by residues N670 and A671. Residues D718 and T719 each contribute to the Ca(2+) site. N-linked (GlcNAc...) asparagine; by host glycosylation is found at N759 and N791. O-linked (GalNAc...) threonine; by host glycosylation is found at T1011 and T1012. The helical transmembrane segment at 1029-1049 (WWQLTLGAICALLLAGLLACC) threads the bilayer. Residues 1050–1063 (AKCLYYLRGAIAPR) are Extracellular-facing.

Homodimer; further assembles into homooligomer. Interacts with human C1QBP. Interacts (via N-terminus) with protease/methyltransferase p150. As to quaternary structure, heterodimer with spike glycoprotein E2. In terms of assembly, heterodimer with spike glycoprotein E1. In terms of processing, structural polyprotein: Specific enzymatic cleavages in vivo yield mature proteins. Two signal peptidase-mediated cleavages within the polyprotein produce the structural proteins capsid, E2, and E1. The E2 signal peptide remains attached to the C-terminus of the capsid protein after cleavage by the signal peptidase. Another signal peptide at E2 C-terminus directs E1 to the ER, with a similar mechanism. Post-translationally, contains three N-linked oligosaccharides. Capsid is phosphorylated on Ser-46 by host. This phosphorylation negatively regulates capsid protein RNA-binding activity. Dephosphorylated by human PP1A.

It localises to the virion. Its subcellular location is the host cytoplasm. The protein localises to the host mitochondrion. The protein resides in the virion membrane. It is found in the host Golgi apparatus membrane. Capsid protein interacts with genomic RNA and assembles into icosahedric core particles 65-70 nm in diameter. The resulting nucleocapsid eventually associates with the cytoplasmic domain of E2 at the cell membrane, leading to budding and formation of mature virions from host Golgi membranes. Phosphorylation negatively regulates RNA-binding activity, possibly delaying virion assembly during the viral replication phase. Capsid protein dimerizes and becomes disulfide-linked in the virion. Modulates genomic RNA replication. Modulates subgenomic RNA synthesis by interacting with human C1QBP/SF2P32. Induces both perinuclear clustering of mitochondria and the formation of electron-dense intermitochondrial plaques, both hallmarks of rubella virus infected cells. Induces apoptosis when expressed in transfected cells. Its function is as follows. Responsible for viral attachment to target host cell, by binding to the cell receptor. Its transport to the plasma membrane depends on interaction with E1 protein. The surface glycoproteins display an irregular helical organization and a pseudo-tetrameric inner nucleocapsid arrangement. Functionally, class II viral fusion protein. Fusion activity is inactive as long as E1 is bound to E2 in mature virion. After virus attachment to target cell and clathrin-mediated endocytosis, acidification of the endosome would induce dissociation of E1/E2 heterodimer and concomitant trimerization of the E1 subunits. This E1 homotrimer is fusion active, and promotes release of viral nucleocapsid in cytoplasm after endosome and viral membrane fusion. The cytoplasmic tail of spike glycoprotein E1 modulates virus release. The surface glycoproteins display an irregular helical organization and a pseudo-tetrameric inner nucleocapsid arrangement. The chain is Structural polyprotein from Homo sapiens (Human).